The primary structure comprises 194 residues: Potassium-transporting ATPase KdpC subunit (194 aa).

A helical transmembrane segment spans residues 12 to 34 (LFLLLLTGGVYPLLTTALGQWWF).

It belongs to the KdpC family. In terms of assembly, the system is composed of three essential subunits: KdpA, KdpB and KdpC.

It localises to the cell inner membrane. Part of the high-affinity ATP-driven potassium transport (or Kdp) system, which catalyzes the hydrolysis of ATP coupled with the electrogenic transport of potassium into the cytoplasm. This subunit acts as a catalytic chaperone that increases the ATP-binding affinity of the ATP-hydrolyzing subunit KdpB by the formation of a transient KdpB/KdpC/ATP ternary complex. This chain is Potassium-transporting ATPase KdpC subunit, found in Salmonella enteritidis PT4 (strain P125109).